The chain runs to 209 residues: 7-carboxy-7-deazaguanine synthase (209 aa).

Residues 10–12 (IQG) and Arg25 contribute to the substrate site. Positions 16 to 205 (YAGLPMLFVR…PQIHKIIYGD (190 aa)) constitute a Radical SAM core domain. Residues Cys29, Cys33, and Cys36 each coordinate [4Fe-4S] cluster. Residue Thr38 participates in Mg(2+) binding. Residue Thr68 participates in substrate binding. An S-adenosyl-L-methionine-binding site is contributed by Gly70.

It belongs to the radical SAM superfamily. 7-carboxy-7-deazaguanine synthase family. As to quaternary structure, homodimer. Requires [4Fe-4S] cluster as cofactor. It depends on S-adenosyl-L-methionine as a cofactor. Mg(2+) serves as cofactor.

The catalysed reaction is 6-carboxy-5,6,7,8-tetrahydropterin + H(+) = 7-carboxy-7-deazaguanine + NH4(+). It functions in the pathway purine metabolism; 7-cyano-7-deazaguanine biosynthesis. In terms of biological role, catalyzes the complex heterocyclic radical-mediated conversion of 6-carboxy-5,6,7,8-tetrahydropterin (CPH4) to 7-carboxy-7-deazaguanine (CDG), a step common to the biosynthetic pathways of all 7-deazapurine-containing compounds. The chain is 7-carboxy-7-deazaguanine synthase from Thermoplasma acidophilum (strain ATCC 25905 / DSM 1728 / JCM 9062 / NBRC 15155 / AMRC-C165).